A 398-amino-acid polypeptide reads, in one-letter code: Acetate kinase (398 aa).

Asn-8 contacts Mg(2+). Lys-15 serves as a coordination point for ATP. Arg-89 serves as a coordination point for substrate. Asp-146 functions as the Proton donor/acceptor in the catalytic mechanism. ATP contacts are provided by residues 206 to 210 (HIGNG), 283 to 285 (DMR), and 331 to 335 (GMGEN). Glu-383 provides a ligand contact to Mg(2+).

This sequence belongs to the acetokinase family. As to quaternary structure, homodimer. Requires Mg(2+) as cofactor. Mn(2+) is required as a cofactor.

Its subcellular location is the cytoplasm. The catalysed reaction is acetate + ATP = acetyl phosphate + ADP. Its pathway is metabolic intermediate biosynthesis; acetyl-CoA biosynthesis; acetyl-CoA from acetate: step 1/2. Its function is as follows. Catalyzes the formation of acetyl phosphate from acetate and ATP. Can also catalyze the reverse reaction. The protein is Acetate kinase of Streptococcus pyogenes serotype M28 (strain MGAS6180).